The primary structure comprises 635 residues: Threonine--tRNA ligase (635 aa).

The TGS domain maps to 1-61; it reads MVSIRLPDGS…DRDASLAIVT (61 aa). A catalytic region spans residues 242-533; sequence DHRKLGKQLD…LIEHHAGAMP (292 aa). 3 residues coordinate Zn(2+): Cys333, His384, and His510.

This sequence belongs to the class-II aminoacyl-tRNA synthetase family. As to quaternary structure, homodimer. Zn(2+) serves as cofactor.

The protein resides in the cytoplasm. It carries out the reaction tRNA(Thr) + L-threonine + ATP = L-threonyl-tRNA(Thr) + AMP + diphosphate + H(+). Catalyzes the attachment of threonine to tRNA(Thr) in a two-step reaction: L-threonine is first activated by ATP to form Thr-AMP and then transferred to the acceptor end of tRNA(Thr). Also edits incorrectly charged L-seryl-tRNA(Thr). This Burkholderia vietnamiensis (strain G4 / LMG 22486) (Burkholderia cepacia (strain R1808)) protein is Threonine--tRNA ligase.